The chain runs to 891 residues: Schlafen family member 5 (891 aa).

K59 participates in a covalent cross-link: Glycyl lysine isopeptide (Lys-Gly) (interchain with G-Cter in SUMO2). 578-585 contacts ATP; sequence GLPGSGKT.

The protein belongs to the Schlafen family. Subgroup III subfamily.

Functionally, may have a role in hematopoietic cell differentiation. The sequence is that of Schlafen family member 5 (SLFN5) from Homo sapiens (Human).